Consider the following 238-residue polypeptide: tRNA (guanine-N(7)-)-methyltransferase (238 aa).

S-adenosyl-L-methionine-binding residues include E70, D95, D122, and D145. The active site involves D145. Residues K149, D181, and 216-219 (TKFE) contribute to the substrate site.

The protein belongs to the class I-like SAM-binding methyltransferase superfamily. TrmB family.

It catalyses the reaction guanosine(46) in tRNA + S-adenosyl-L-methionine = N(7)-methylguanosine(46) in tRNA + S-adenosyl-L-homocysteine. The protein operates within tRNA modification; N(7)-methylguanine-tRNA biosynthesis. Its function is as follows. Catalyzes the formation of N(7)-methylguanine at position 46 (m7G46) in tRNA. This Neisseria meningitidis serogroup A / serotype 4A (strain DSM 15465 / Z2491) protein is tRNA (guanine-N(7)-)-methyltransferase.